Reading from the N-terminus, the 300-residue chain is Spermatogenesis-associated serine-rich protein 1 (300 aa).

Positions 1-10 (MSPSMLTGNS) are enriched in polar residues. 2 disordered regions span residues 1-42 (MSPS…MTEV) and 64-91 (TPSG…LPRV). The span at 27–42 (QLEKVPEKRDSGMTEV) shows a compositional bias: basic and acidic residues. The segment covering 64–85 (TPSGKSVSSSSSVETGPSVSEP) has biased composition (low complexity). S113 is subject to Phosphoserine.

The protein is Spermatogenesis-associated serine-rich protein 1 (SPATS1) of Homo sapiens (Human).